A 360-amino-acid polypeptide reads, in one-letter code: Phospho-N-acetylmuramoyl-pentapeptide-transferase (360 aa).

Transmembrane regions (helical) follow at residues 21 to 41 (YVTFRAILGLMTALVFCLWWG), 74 to 94 (MGGILILAGIFISVLLWGDLG), 97 to 117 (YVWVVLFVLASFGLIGFIDDY), 135 to 155 (ILQSLAAIIIAFYLYASADTV), 168 to 188 (IMPQMGAFFIVLAYFTIVGSS), 199 to 219 (GLAIMPTVMVAAAFALIAYLS), 236 to 256 (AGELVIVCTAIVGAGLGFLWF), 263 to 283 (VFMGDVGSLALGAALGAIAVL), 288 to 308 (ILLVIMGGVFVMETVSVILQV), and 338 to 358 (VIVRFWIISLFLVMLGLATLK).

It belongs to the glycosyltransferase 4 family. MraY subfamily. The cofactor is Mg(2+).

The protein localises to the cell inner membrane. It catalyses the reaction UDP-N-acetyl-alpha-D-muramoyl-L-alanyl-gamma-D-glutamyl-meso-2,6-diaminopimeloyl-D-alanyl-D-alanine + di-trans,octa-cis-undecaprenyl phosphate = di-trans,octa-cis-undecaprenyl diphospho-N-acetyl-alpha-D-muramoyl-L-alanyl-D-glutamyl-meso-2,6-diaminopimeloyl-D-alanyl-D-alanine + UMP. It functions in the pathway cell wall biogenesis; peptidoglycan biosynthesis. Functionally, catalyzes the initial step of the lipid cycle reactions in the biosynthesis of the cell wall peptidoglycan: transfers peptidoglycan precursor phospho-MurNAc-pentapeptide from UDP-MurNAc-pentapeptide onto the lipid carrier undecaprenyl phosphate, yielding undecaprenyl-pyrophosphoryl-MurNAc-pentapeptide, known as lipid I. This chain is Phospho-N-acetylmuramoyl-pentapeptide-transferase, found in Shewanella violacea (strain JCM 10179 / CIP 106290 / LMG 19151 / DSS12).